The chain runs to 237 residues: Probable aquaporin SIP2-1 (237 aa).

The next 6 membrane-spanning stretches (helical) occupy residues 15–35 (FMWI…LGFS), 39–59 (PSGE…FAYL), 71–91 (LTAL…SVFV), 122–142 (VAIH…VLLS), 169–189 (ILGS…GWAY), and 202–222 (VYWL…KVVF). Positions 69-71 (NPL) match the NPA 1 motif. An NPA 2 motif is present at residues 180–182 (NPA).

Belongs to the MIP/aquaporin (TC 1.A.8) family. SIP (TC 1.A.8.10) subfamily. Expressed in dividing cells and elongating regions of the root tips, emerging lateral roots, root steles, cotyledons, main veins of the rosette leaves, vascular tissues of the flower petals, stigma, stamens (anthers and filaments), pollen and the top and bottom (receptacle) of siliques.

It localises to the endoplasmic reticulum membrane. Its function is as follows. Water channel required to facilitate the transport of water across cell membrane. Inactive in yeast cells. In Arabidopsis thaliana (Mouse-ear cress), this protein is Probable aquaporin SIP2-1 (SIP2-1).